A 416-amino-acid chain; its full sequence is Phosphatidylinositol 5-phosphate 4-kinase type-2 gamma (416 aa).

The PIPK domain maps to 38-415 (ASDPMLSVFM…RFREFISNIF (378 aa)).

Post-translationally, phosphorylated, phosphorylation is induced by EGF.

Its subcellular location is the endoplasmic reticulum. It localises to the cytoplasm. It catalyses the reaction a 1,2-diacyl-sn-glycero-3-phospho-(1D-myo-inositol-5-phosphate) + ATP = a 1,2-diacyl-sn-glycero-3-phospho-(1D-myo-inositol-4,5-bisphosphate) + ADP + H(+). It carries out the reaction 1,2-dihexadecanoyl-sn-glycero-3-phospho-(1D-myo-inositol-5-phosphate) + ATP = 1,2-dihexadecanoyl-sn-glycero-3-phospho-(1D-myo-inositol-4,5-bisphosphate) + ADP + H(+). The enzyme catalyses 1,2-dihexadecanoyl-sn-glycero-3-phospho-(1D-myo-inositol-5-phosphate) + GTP = 1,2-dihexadecanoyl-sn-glycero-3-phospho-(1D-myo-inositol-4,5-bisphosphate) + GDP + H(+). Functionally, phosphatidylinositol 5-phosphate 4-kinase with low enzymatic activity. May be a GTP sensor, has higher GTP-dependent kinase activity than ATP-dependent kinase activity. This Danio rerio (Zebrafish) protein is Phosphatidylinositol 5-phosphate 4-kinase type-2 gamma (pip4k2c).